Consider the following 363-residue polypeptide: tRNA N6-adenosine threonylcarbamoyltransferase (363 aa).

2 residues coordinate Fe cation: H121 and H125. Substrate is bound by residues 143–147, D176, G189, and N287; that span reads LASGG. D315 provides a ligand contact to Fe cation.

The protein belongs to the KAE1 / TsaD family. Requires Fe(2+) as cofactor.

The protein localises to the cytoplasm. It catalyses the reaction L-threonylcarbamoyladenylate + adenosine(37) in tRNA = N(6)-L-threonylcarbamoyladenosine(37) in tRNA + AMP + H(+). Functionally, required for the formation of a threonylcarbamoyl group on adenosine at position 37 (t(6)A37) in tRNAs that read codons beginning with adenine. Is involved in the transfer of the threonylcarbamoyl moiety of threonylcarbamoyl-AMP (TC-AMP) to the N6 group of A37, together with TsaE and TsaB. TsaD likely plays a direct catalytic role in this reaction. The chain is tRNA N6-adenosine threonylcarbamoyltransferase from Rhodopseudomonas palustris (strain HaA2).